A 271-amino-acid chain; its full sequence is ATP synthase subunit a (271 aa).

5 consecutive transmembrane segments (helical) span residues 38–58 (FWTL…LFLV), 100–120 (LIAP…LMDL), 146–166 (DVNI…FYSI), 220–240 (LIFI…LNVP), and 242–262 (AIFH…LTIV).

It belongs to the ATPase A chain family. In terms of assembly, F-type ATPases have 2 components, CF(1) - the catalytic core - and CF(0) - the membrane proton channel. CF(1) has five subunits: alpha(3), beta(3), gamma(1), delta(1), epsilon(1). CF(0) has three main subunits: a(1), b(2) and c(9-12). The alpha and beta chains form an alternating ring which encloses part of the gamma chain. CF(1) is attached to CF(0) by a central stalk formed by the gamma and epsilon chains, while a peripheral stalk is formed by the delta and b chains.

The protein localises to the cell inner membrane. In terms of biological role, key component of the proton channel; it plays a direct role in the translocation of protons across the membrane. The sequence is that of ATP synthase subunit a from Salmonella arizonae (strain ATCC BAA-731 / CDC346-86 / RSK2980).